The chain runs to 119 residues: Membrane-anchored ubiquitin-fold protein 6 (119 aa).

The Ubiquitin-like domain occupies 8–76 (IELKFRLADG…NNRTLAESRL (69 aa)). The S-palmitoyl cysteine moiety is linked to residue cysteine 114. A Cysteine methyl ester modification is found at cysteine 116. Residue cysteine 116 is the site of S-geranylgeranyl cysteine attachment. A propeptide spans 117–119 (TIL) (removed in mature form).

Ubiquitous.

Its subcellular location is the cell membrane. May serve as docking site to facilitate the association of other proteins to the plasma membrane. This chain is Membrane-anchored ubiquitin-fold protein 6 (MUB6), found in Arabidopsis thaliana (Mouse-ear cress).